We begin with the raw amino-acid sequence, 304 residues long: Probable aquaporin NIP5-1 (304 aa).

2 helical membrane-spanning segments follow: residues Leu-80–Val-100 and Gly-106–Leu-126. The NPA 1 signature appears at Asn-137–Ser-139. 3 consecutive transmembrane segments (helical) span residues Ala-157 to Phe-177, Ala-195 to Thr-215, and Ala-219 to Ala-239. Positions Asn-248 to Val-250 match the NPA 2 motif. A helical transmembrane segment spans residues Trp-266–Val-286. Phosphoserine is present on Ser-301.

It belongs to the MIP/aquaporin (TC 1.A.8) family. NIP (TC 1.A.8.12) subfamily. As to expression, expressed in rosette leaves.

The protein resides in the cell membrane. Functionally, boric acid transporter. Low water transport activity. Plays an important role as plasma membrane boric acid channel for the boron uptake required for plant growth and development under boron limitation. The sequence is that of Probable aquaporin NIP5-1 (NIP5-1) from Arabidopsis thaliana (Mouse-ear cress).